The chain runs to 81 residues: Putative defensin-like protein 188 (81 aa).

An N-terminal signal peptide occupies residues 1–19 (MKNSSLLFILIVVFVISSS). Cystine bridges form between C31–C81, C37–C57, C43–C75, and C47–C77.

Belongs to the DEFL family.

It is found in the secreted. The chain is Putative defensin-like protein 188 (LCR41) from Arabidopsis thaliana (Mouse-ear cress).